Here is a 290-residue protein sequence, read N- to C-terminus: Probable protein phosphatase 2C 62 (290 aa).

The region spanning 38-288 is the PPM-type phosphatase domain; it reads KHGYHLVKGK…DDISCIVVKF (251 aa). Residues aspartate 75, glycine 76, aspartate 240, and aspartate 279 each contribute to the Mn(2+) site.

It belongs to the PP2C family. Mg(2+) serves as cofactor. Mn(2+) is required as a cofactor.

The enzyme catalyses O-phospho-L-seryl-[protein] + H2O = L-seryl-[protein] + phosphate. The catalysed reaction is O-phospho-L-threonyl-[protein] + H2O = L-threonyl-[protein] + phosphate. In Oryza sativa subsp. japonica (Rice), this protein is Probable protein phosphatase 2C 62.